A 201-amino-acid polypeptide reads, in one-letter code: MSKVLVLKSSILAGYSQSGQLTDYFIEQWREKHVADEITVRDLAANPVPVLDGELVGAMRPGDAPLTPRQQDALALSDELIAELKAHDVIVIAAPMYNFNIPTQLKNYFDLIARAGVTFRYTEKGPEGLVTGKRAVVLSSRGGIHKDTPTDLIAPYLKVFLGFIGITDVNFVFAEGIAYGPEVAAKAQSDAKAAIDSVVAA.

FMN-binding positions include serine 10, 16-18, 96-99, and 140-143; these read SQS, MYNF, and SRGG.

It belongs to the azoreductase type 1 family. In terms of assembly, homodimer. FMN is required as a cofactor.

It catalyses the reaction 2 a quinone + NADH + H(+) = 2 a 1,4-benzosemiquinone + NAD(+). The enzyme catalyses N,N-dimethyl-1,4-phenylenediamine + anthranilate + 2 NAD(+) = 2-(4-dimethylaminophenyl)diazenylbenzoate + 2 NADH + 2 H(+). Its function is as follows. Quinone reductase that provides resistance to thiol-specific stress caused by electrophilic quinones. Also exhibits azoreductase activity. Catalyzes the reductive cleavage of the azo bond in aromatic azo compounds to the corresponding amines. The polypeptide is FMN-dependent NADH:quinone oxidoreductase (Salmonella arizonae (strain ATCC BAA-731 / CDC346-86 / RSK2980)).